We begin with the raw amino-acid sequence, 225 residues long: tRNA (guanine-N(7)-)-methyltransferase (225 aa).

S-adenosyl-L-methionine is bound by residues E56, E81, D108, and D131. The active site involves D131. Substrate is bound by residues K135, D167, and 204–207; that span reads TKFE.

It belongs to the class I-like SAM-binding methyltransferase superfamily. TrmB family.

It catalyses the reaction guanosine(46) in tRNA + S-adenosyl-L-methionine = N(7)-methylguanosine(46) in tRNA + S-adenosyl-L-homocysteine. It functions in the pathway tRNA modification; N(7)-methylguanine-tRNA biosynthesis. In terms of biological role, catalyzes the formation of N(7)-methylguanine at position 46 (m7G46) in tRNA. The chain is tRNA (guanine-N(7)-)-methyltransferase from Legionella pneumophila (strain Corby).